The primary structure comprises 506 residues: Glutamate--tRNA ligase (506 aa).

The 'HIGH' region motif lies at 14–24 (PSPTGYLHIGG). The 'KMSKS' region signature appears at 261 to 265 (KLSKR). Lys264 serves as a coordination point for ATP.

The protein belongs to the class-I aminoacyl-tRNA synthetase family. Glutamate--tRNA ligase type 1 subfamily. As to quaternary structure, monomer.

Its subcellular location is the cytoplasm. It carries out the reaction tRNA(Glu) + L-glutamate + ATP = L-glutamyl-tRNA(Glu) + AMP + diphosphate. Its function is as follows. Catalyzes the attachment of glutamate to tRNA(Glu) in a two-step reaction: glutamate is first activated by ATP to form Glu-AMP and then transferred to the acceptor end of tRNA(Glu). The protein is Glutamate--tRNA ligase of Roseiflexus sp. (strain RS-1).